The sequence spans 605 residues: Beta-hexosaminidase ARB_07893 (605 aa).

The first 18 residues, 1–18 (MLWIWVPGILGLFGRVEA), serve as a signal peptide directing secretion. The N-linked (GlcNAc...) asparagine glycan is linked to Asn30. The active-site Nucleophile is Glu293. Asn342 is a glycosylation site (N-linked (GlcNAc...) asparagine). The Proton donor role is filled by Glu374. Asn449 carries N-linked (GlcNAc...) asparagine glycosylation.

Belongs to the glycosyl hydrolase 20 family.

It is found in the secreted. The enzyme catalyses Hydrolysis of terminal non-reducing N-acetyl-D-hexosamine residues in N-acetyl-beta-D-hexosaminides.. Its function is as follows. Beta-hexosaminidase that shows a broad substrate specificity. In Arthroderma benhamiae (strain ATCC MYA-4681 / CBS 112371) (Trichophyton mentagrophytes), this protein is Beta-hexosaminidase ARB_07893.